The following is a 203-amino-acid chain: NAD(P)H dehydrogenase (quinone) (203 aa).

The Flavodoxin-like domain maps to 3–194; sequence IMVVYYSAYG…AGANFQGRHV (192 aa). FMN-binding positions include 9-14 and 82-84; these read SAYGHV and ARF. Y11 provides a ligand contact to NAD(+). Substrate is bound at residue W102. Residues 117–123 and H138 each bind FMN; that span reads STGTQHG.

This sequence belongs to the WrbA family. Requires FMN as cofactor.

It catalyses the reaction a quinone + NADH + H(+) = a quinol + NAD(+). The enzyme catalyses a quinone + NADPH + H(+) = a quinol + NADP(+). The sequence is that of NAD(P)H dehydrogenase (quinone) from Syntrophus aciditrophicus (strain SB).